Consider the following 170-residue polypeptide: Translationally-controlled tumor protein homolog (170 aa).

Residues 1-170 (MIIYKCIISG…FKDGLLAEKC (170 aa)) form the TCTP domain.

This sequence belongs to the TCTP family.

It localises to the cytoplasm. Its function is as follows. Involved in calcium binding and microtubule stabilization. In Lateolabrax japonicus (Japanese sea perch), this protein is Translationally-controlled tumor protein homolog (tpt1).